Here is a 269-residue protein sequence, read N- to C-terminus: Putative 6-phosphogluconolactonase (269 aa).

The interval 248-269 (DAATGVPDRDSSDSDSPPPFDG) is disordered.

The protein belongs to the glucosamine/galactosamine-6-phosphate isomerase family. 6-phosphogluconolactonase subfamily.

It localises to the nucleus. The enzyme catalyses 6-phospho-D-glucono-1,5-lactone + H2O = 6-phospho-D-gluconate + H(+). It participates in carbohydrate degradation; pentose phosphate pathway; D-ribulose 5-phosphate from D-glucose 6-phosphate (oxidative stage): step 2/3. In terms of biological role, hydrolysis of 6-phosphogluconolactone to 6-phosphogluconate. This is Putative 6-phosphogluconolactonase from Caenorhabditis elegans.